Here is a 329-residue protein sequence, read N- to C-terminus: Trans-1,2-dihydrobenzene-1,2-diol dehydrogenase (329 aa).

Belongs to the Gfo/Idh/MocA family. As to quaternary structure, homodimer. Lens, liver and small intestine.

It catalyses the reaction (1R,2R)-1,2-dihydrobenzene-1,2-diol + NADP(+) = catechol + NADPH + H(+). The enzyme catalyses D-xylose + NADP(+) = D-xylono-1,5-lactone + NADPH + H(+). Stimulated by various salts. This is Trans-1,2-dihydrobenzene-1,2-diol dehydrogenase (DHDH) from Oryctolagus cuniculus (Rabbit).